The chain runs to 546 residues: Chaperonin GroEL (546 aa).

Residues 30-33, lysine 51, 87-91, glycine 415, and aspartate 497 contribute to the ATP site; these read TLGP and DGTTT. The disordered stretch occupies residues 527 to 546; sequence PKKDSPAPAMPGGGMGGMDF. A compositionally biased stretch (gly residues) spans 537–546; sequence PGGGMGGMDF.

This sequence belongs to the chaperonin (HSP60) family. Forms a cylinder of 14 subunits composed of two heptameric rings stacked back-to-back. Interacts with the co-chaperonin GroES.

The protein localises to the cytoplasm. It carries out the reaction ATP + H2O + a folded polypeptide = ADP + phosphate + an unfolded polypeptide.. Its function is as follows. Together with its co-chaperonin GroES, plays an essential role in assisting protein folding. The GroEL-GroES system forms a nano-cage that allows encapsulation of the non-native substrate proteins and provides a physical environment optimized to promote and accelerate protein folding. This Methylobacterium radiotolerans (strain ATCC 27329 / DSM 1819 / JCM 2831 / NBRC 15690 / NCIMB 10815 / 0-1) protein is Chaperonin GroEL.